Consider the following 434-residue polypeptide: MEQNTYYFVGIKGTGMASLARILHDKGHQVLGSDIEKETFTQAPLLAAGIKILPFDPANLKPGMIVIQGNAFDDDHPEIKRAHELGLKILSYPEAVENEVKNHTSIGIAGAHGKTSTTALLSHVLAAVEPTSYLIGDGVGKGNADARFFVFEADEYRDHFLAYHPDYAIMTNVDFDHPDYFNDLADVRDSFETYGKQVQRAIFAWGDDPSLRDLNVDVPVYYYGTNPDDDFRAENIQRTPEGSTYDAYFRDQKLGTFTIHLYGEHSVLNSLAVLAVAYMEHMNMDEIQQELANFSGVKRRFSETDIADTTIIDDYAHHPSEIKATIDAARQKYPDREVIAVFQPHTYSRLAAYIDGFAESLSRADKTFVTPIFGSIRENAGNVSSADLEQRIDGSEGIDMDTMDKLLQYHNAVVVFMGAGDVEKYEEKYKELLK.

Residue 110 to 116 (GAHGKTS) coordinates ATP.

The protein belongs to the MurCDEF family.

It is found in the cytoplasm. It carries out the reaction UDP-N-acetyl-alpha-D-muramate + L-alanine + ATP = UDP-N-acetyl-alpha-D-muramoyl-L-alanine + ADP + phosphate + H(+). It functions in the pathway cell wall biogenesis; peptidoglycan biosynthesis. In terms of biological role, cell wall formation. This Limosilactobacillus reuteri (strain DSM 20016) (Lactobacillus reuteri) protein is UDP-N-acetylmuramate--L-alanine ligase.